Here is a 621-residue protein sequence, read N- to C-terminus: Very-long-chain aldehyde decarbonylase GL1-5 (621 aa).

5 helical membrane passes run 99 to 119 (IILS…GQHL), 126 to 146 (GAGL…YWFH), 186 to 206 (LLFS…IIAF), 224 to 244 (FELV…LMYT), and 332 to 352 (MWPL…SFTV). Positions 138-272 (VEFLYYWFHR…MPFYDYIYNT (135 aa)) constitute a Fatty acid hydroxylase domain.

It belongs to the sterol desaturase family. As to quaternary structure, homodimer. Expressed in panicles, developing spikelets, stamens and hulls and, at low levels, in roots, developing seeds, flag leaves and seedling shoots. Strongly expressed in the epidermal cells of anthers.

It localises to the endoplasmic reticulum membrane. It catalyses the reaction a long-chain fatty aldehyde + 2 NADPH + O2 + H(+) = a long-chain alkane + formate + 2 NADP(+) + H2O. In terms of biological role, aldehyde decarbonylase involved in the conversion of aldehydes to alkanes. Core component of a very-long-chain alkane synthesis complex. Required for the biosynthesis of very-long-chain fatty acids (including polyesters) in cuticles, anther tapetum and pollen exine. The polypeptide is Very-long-chain aldehyde decarbonylase GL1-5 (Oryza sativa subsp. japonica (Rice)).